Consider the following 240-residue polypeptide: Mediator of RNA polymerase II transcription subunit 19-B (240 aa).

Positions 1–14 are enriched in polar residues; that stretch reads MTEIFSSLYGQPDS. Disordered stretches follow at residues 1 to 29 and 168 to 240; these read MTEI…GSGK and PKKK…SSLR. Composition is skewed to basic residues over residues 168-180 and 209-221; these read PKKK…KHHR and KKKK…KKNR.

Belongs to the Mediator complex subunit 19 family. In terms of assembly, component of the Mediator complex.

Its subcellular location is the nucleus. In terms of biological role, component of the Mediator complex, a coactivator involved in the regulated transcription of nearly all RNA polymerase II-dependent genes. Mediator functions as a bridge to convey information from gene-specific regulatory proteins to the basal RNA polymerase II transcription machinery. Mediator is recruited to promoters by direct interactions with regulatory proteins and serves as a scaffold for the assembly of a functional preinitiation complex with RNA polymerase II and the general transcription factors. This chain is Mediator of RNA polymerase II transcription subunit 19-B (med19b), found in Danio rerio (Zebrafish).